The primary structure comprises 235 residues: Elongation factor Tu (235 aa).

Positions 1–125 (KNMITGAAQM…EVDEYIPTPE (125 aa)) constitute a tr-type G domain. 47 to 50 (NKED) contacts GTP.

The protein belongs to the TRAFAC class translation factor GTPase superfamily. Classic translation factor GTPase family. EF-Tu/EF-1A subfamily. As to quaternary structure, monomer.

The protein resides in the cytoplasm. It catalyses the reaction GTP + H2O = GDP + phosphate + H(+). Functionally, GTP hydrolase that promotes the GTP-dependent binding of aminoacyl-tRNA to the A-site of ribosomes during protein biosynthesis. The sequence is that of Elongation factor Tu (tufA) from Gloeothece membranacea (strain PCC 6501 / SAG 26.84).